A 477-amino-acid chain; its full sequence is 3-sulfolactaldehyde dehydrogenase (477 aa).

An NAD(+)-binding site is contributed by 232–233; sequence GS. Catalysis depends on glutamate 252, which acts as the Proton acceptor. Leucine 253 provides a ligand contact to NAD(+). Cysteine 286 acts as the Nucleophile in catalysis. Glutamate 380 contacts NAD(+).

This sequence belongs to the aldehyde dehydrogenase family.

The enzyme catalyses (2S)-3-sulfolactaldehyde + NAD(+) + H2O = (2S)-3-sulfolactate + NADH + 2 H(+). Functionally, part of the sulfo-TAL (or sulfo-SFT) pathway, a D-sulfoquinovose degradation pathway that produces sulfolactate (SL). Catalyzes the oxidation of 3-sulfolactaldehyde (SLA) to sulfolactate (SL). This chain is 3-sulfolactaldehyde dehydrogenase, found in Priestia aryabhattai (Bacillus aryabhattai).